Here is a 212-residue protein sequence, read N- to C-terminus: MNDAALAPDVSAALERGLQAQSLDTAFAAPLLRYLALLVRWNKTYNLTAVRDPRAMVTRHLLDSLAMQPYIASGMLADLGTGPGLPGIPLAITRPQLQVTLVESNGKKVRFMREALRHLELRNARVAESRAEALDEPTAYDHLTARALDKLAGIIAVGGHLLRPGGSLLAMKGIYPHEEIAALPEGWTMSEVHQLQVPGLDGERHLVVVRKA.

S-adenosyl-L-methionine-binding positions include Gly80, Leu85, Ala131–Glu132, and Arg146.

This sequence belongs to the methyltransferase superfamily. RNA methyltransferase RsmG family.

The protein localises to the cytoplasm. It catalyses the reaction guanosine(527) in 16S rRNA + S-adenosyl-L-methionine = N(7)-methylguanosine(527) in 16S rRNA + S-adenosyl-L-homocysteine. Functionally, specifically methylates the N7 position of guanine in position 527 of 16S rRNA. This is Ribosomal RNA small subunit methyltransferase G from Xanthomonas oryzae pv. oryzae (strain MAFF 311018).